Here is a 608-residue protein sequence, read N- to C-terminus: Glutamyl-tRNA(Gln) amidotransferase subunit E (608 aa).

A disordered region spans residues 402 to 422 (EETRGANPDGTTRFLRPRPGA).

The protein belongs to the GatB/GatE family. GatE subfamily. As to quaternary structure, heterodimer of GatD and GatE.

It catalyses the reaction L-glutamyl-tRNA(Gln) + L-glutamine + ATP + H2O = L-glutaminyl-tRNA(Gln) + L-glutamate + ADP + phosphate + H(+). Allows the formation of correctly charged Gln-tRNA(Gln) through the transamidation of misacylated Glu-tRNA(Gln) in organisms which lack glutaminyl-tRNA synthetase. The reaction takes place in the presence of glutamine and ATP through an activated gamma-phospho-Glu-tRNA(Gln). The GatDE system is specific for glutamate and does not act on aspartate. In Pyrobaculum calidifontis (strain DSM 21063 / JCM 11548 / VA1), this protein is Glutamyl-tRNA(Gln) amidotransferase subunit E.